Here is a 137-residue protein sequence, read N- to C-terminus: Ribonuclease VapC3 (137 aa).

The PINc domain maps to 12–129 (VVVDASAMVD…LTTDERLARA (118 aa)). Mg(2+)-binding residues include Asp-15 and Asp-105.

Belongs to the PINc/VapC protein family. Requires Mg(2+) as cofactor.

Toxic component of a type II toxin-antitoxin (TA) system. An RNase. Its toxic effect is neutralized by coexpression with cognate antitoxin VapB3. The polypeptide is Ribonuclease VapC3 (Mycobacterium tuberculosis (strain CDC 1551 / Oshkosh)).